The sequence spans 211 residues: MKCIDRRLIGDLIALSTVEGLSVTDAAEKLCLTRQGLYKLLRHLKKEGYVAEGPAIRLTQKGKDTLGIVLKDLLRYFNILSIRLSGRVVSGLGEGAFYMSLEGYRRAIEQKLGFTPYPGTLNIKLDPPSVVYKRYLDSLPGILIPGFSNGLRTYGAVKAFRAKLRDIEGAIVMPERTHHPTDVIEVIAPFKLREILGLRDGDRVEIEIYLE.

The interval 1-81 (MKCIDRRLIG…DLLRYFNILS (81 aa)) is H-T-H motif-like. Residues 82-211 (IRLSGRVVSG…DRVEIEIYLE (130 aa)) form a riboflavin kinase region. Residue 91–96 (GLGEGA) participates in CDP binding. Mg(2+) is bound by residues T120 and N122. T177 and E185 together coordinate FMN. 190-193 (FKLR) serves as a coordination point for CDP.

The protein belongs to the archaeal riboflavin kinase family. Mg(2+) serves as cofactor.

The catalysed reaction is riboflavin + CTP = CDP + FMN + H(+). It functions in the pathway cofactor biosynthesis; FMN biosynthesis; FMN from riboflavin (CTP route): step 1/1. In terms of biological role, catalyzes the CTP-dependent phosphorylation of riboflavin (vitamin B2) to form flavin mononucleotide (FMN). This chain is Riboflavin kinase (ribK), found in Pyrobaculum islandicum (strain DSM 4184 / JCM 9189 / GEO3).